A 624-amino-acid chain; its full sequence is DNA mismatch repair protein MutL (624 aa).

The segment at 360–396 (GGNHFSQPAPRRETASTEPAVARERAPQPAYHSGSGY) is disordered. Over residues 369-385 (PRRETASTEPAVARERA) the composition is skewed to basic and acidic residues.

It belongs to the DNA mismatch repair MutL/HexB family.

In terms of biological role, this protein is involved in the repair of mismatches in DNA. It is required for dam-dependent methyl-directed DNA mismatch repair. May act as a 'molecular matchmaker', a protein that promotes the formation of a stable complex between two or more DNA-binding proteins in an ATP-dependent manner without itself being part of a final effector complex. This Serratia proteamaculans (strain 568) protein is DNA mismatch repair protein MutL.